The primary structure comprises 352 residues: Phosphate acyltransferase (352 aa).

Positions 328-339 (ESFPGDAREREG) are enriched in basic and acidic residues. The tract at residues 328-352 (ESFPGDAREREGAPAPDAGTERVAS) is disordered.

Belongs to the PlsX family. Homodimer. Probably interacts with PlsY.

The protein resides in the cytoplasm. The enzyme catalyses a fatty acyl-[ACP] + phosphate = an acyl phosphate + holo-[ACP]. It participates in lipid metabolism; phospholipid metabolism. Its function is as follows. Catalyzes the reversible formation of acyl-phosphate (acyl-PO(4)) from acyl-[acyl-carrier-protein] (acyl-ACP). This enzyme utilizes acyl-ACP as fatty acyl donor, but not acyl-CoA. The chain is Phosphate acyltransferase from Citrifermentans bemidjiense (strain ATCC BAA-1014 / DSM 16622 / JCM 12645 / Bem) (Geobacter bemidjiensis).